Consider the following 521-residue polypeptide: MAEKSGVTGLDFEFVKTPAFPKPDFDKLENVGVPTTRYPAIKNAPLPADGSGSDTFNNYVLISILTIVPWWLSWKVGGGFKTTLFFAIIVDLPMLAAWWLTISAISPRKNEKVRLPNRGVEHYLEFKKEADRAKYRGTNKIPMETFYEMYFDGDVDFKGDCLEVMEQRHDWVSFRFTIGLIKFFLFGMMPEVIMHTRSQDEEQVRDHYDRGDDFYGWFLGPRMIYTSGIISDINREETLEELQDNKLTVVCEKIGLTKGDSMLDIGCGWGTLARFASEQYGANVTGVTLGRNQTAWGNSSMRKVGIPEEQSRIVCKDYRDIPVPVGGYKKITSLEMSEHVGIRHFSSFLKQVHDMLDDDGVFFLQYAGIRKAWQYEDLTWGLFMNKYIFPGADASTPLGWVVDKLEGTGFEIKHIDTIGVHYSATLWRWYRNWMDNRDKVEAKYGKRWFRIWEFFLAYSTIISRQGSATCFQITMVKNINSTHRIDGVETQFNLHGALDNCRADLQSWAAKNNVKTPSELL.

2 helical membrane-spanning segments follow: residues Val-60–Phe-80 and Phe-85–Ile-105. Residues Tyr-225 to Thr-226, Met-262 to Gly-270, Thr-288 to Gln-293, and Tyr-318 to Arg-319 contribute to the S-adenosyl-L-methionine site.

Belongs to the CFA/CMAS family.

The protein localises to the membrane. The enzyme catalyses a (4E,8E)-4-sphinga-4,8-dienine ceramide + S-adenosyl-L-methionine = a 9-methyl-(4E,8E)-sphinga-4,8-dienine ceramide + S-adenosyl-L-homocysteine + H(+). Its pathway is lipid metabolism; sphingolipid metabolism. In terms of biological role, catalyzes methylation of the sphingoid base component of glucosylceramides (GluCers) at the C9-position. Sphingolipid C9-methylation requires 4,8-desaturated ceramides as substrates. Glucosylceramides play important roles in growth, differentiation and pathogenicity. The methyl group at the C9-position distinguishes fungal glucosylceramides from those of plants and animals and may thus play a role in host-pathogen interactions enabling the host to recognize the fungal attack and initiate specific defense responses. However, C-9 methylation of GlcCers is not essential for the sensitivity of F.graminearum to plant defensins MsDef1 and RsAFP2. The chain is Sphingolipid C9-methyltransferase 2 from Gibberella zeae (strain ATCC MYA-4620 / CBS 123657 / FGSC 9075 / NRRL 31084 / PH-1) (Wheat head blight fungus).